The primary structure comprises 71 residues: Antitoxin VapB22 (71 aa).

The protein belongs to the phD/YefM antitoxin family.

Antitoxin component of a type II toxin-antitoxin (TA) system. Upon expression in M.smegmatis neutralizes the effect of cognate toxin VapC22. This chain is Antitoxin VapB22 (vapB22), found in Mycobacterium tuberculosis (strain ATCC 25618 / H37Rv).